The chain runs to 330 residues: Ribosomal RNA small subunit methyltransferase H (330 aa).

Residues 50-52, Asp-69, Leu-103, Asp-117, and Gln-124 contribute to the S-adenosyl-L-methionine site; that span reads GGH.

It belongs to the methyltransferase superfamily. RsmH family.

It is found in the cytoplasm. The enzyme catalyses cytidine(1402) in 16S rRNA + S-adenosyl-L-methionine = N(4)-methylcytidine(1402) in 16S rRNA + S-adenosyl-L-homocysteine + H(+). Functionally, specifically methylates the N4 position of cytidine in position 1402 (C1402) of 16S rRNA. The sequence is that of Ribosomal RNA small subunit methyltransferase H from Saccharopolyspora erythraea (strain ATCC 11635 / DSM 40517 / JCM 4748 / NBRC 13426 / NCIMB 8594 / NRRL 2338).